The sequence spans 269 residues: Tryptophan synthase alpha chain (269 aa).

Residues Glu50 and Asp61 each act as proton acceptor in the active site.

The protein belongs to the TrpA family. Tetramer of two alpha and two beta chains.

The enzyme catalyses (1S,2R)-1-C-(indol-3-yl)glycerol 3-phosphate + L-serine = D-glyceraldehyde 3-phosphate + L-tryptophan + H2O. It participates in amino-acid biosynthesis; L-tryptophan biosynthesis; L-tryptophan from chorismate: step 5/5. In terms of biological role, the alpha subunit is responsible for the aldol cleavage of indoleglycerol phosphate to indole and glyceraldehyde 3-phosphate. In Francisella tularensis subsp. tularensis (strain FSC 198), this protein is Tryptophan synthase alpha chain.